Consider the following 547-residue polypeptide: Signal recognition particle receptor subunit alpha homolog (547 aa).

Residues 124 to 174 are disordered; the sequence is LENETDTKSLPVEANNDNSARKKNEYEMKKKGAQSKQTNAPKKGKKQLRKW. The segment covering 142–153 has biased composition (basic and acidic residues); that stretch reads SARKKNEYEMKK. Residues 343-546 are NG domain; sequence YTISLIGVNG…SVDWVVDQLM (204 aa). Residues 349 to 356, 437 to 441, and 498 to 501 each bind GTP; these read GVNGVGKS, DTAGR, and SKVD.

It belongs to the GTP-binding SRP family. Heterodimer of an alpha and a beta chain.

The protein resides in the endoplasmic reticulum membrane. In terms of biological role, component of the SRP (signal recognition particle) receptor (SR). Ensures, in conjunction with the signal recognition particle, the correct targeting of the nascent secretory proteins to the endoplasmic reticulum membrane system. GTP hydrolysis may enhance the fidelity of and provide unidirectionality to the targeting reaction. The polypeptide is Signal recognition particle receptor subunit alpha homolog (srp101) (Schizosaccharomyces pombe (strain 972 / ATCC 24843) (Fission yeast)).